Here is a 577-residue protein sequence, read N- to C-terminus: Insulin-like growth factor 2 mRNA-binding protein 1 (577 aa).

RRM domains follow at residues 2–75 (NKLY…HSVP) and 81–156 (RKIQ…YIPD). S12 and S73 each carry phosphoserine. The tract at residues 156-190 (DEQITQGPENGRRGGFGSRGQPRQGSPVAAGAPAK) is disordered. A Phosphoserine; by MTOR modification is found at S181. KH domains are found at residues 195-260 (DIPL…CKMI), 276-343 (EVPL…EQEI), 405-470 (QEMV…QGRI), and 487-553 (KLET…QRKI). The sufficient for nuclear export stretch occupies residues 312–323 (ISSLQDLTLYNP). A sufficient for nuclear export region spans residues 485-495 (EVKLETHIRVP). Position 528 is a phosphothreonine (T528).

Belongs to the RRM IMP/VICKZ family. In terms of assembly, can form homodimers and heterodimers with IGF2BP1 and IGF2BP3. Component of the coding region determinant (CRD)-mediated complex, composed of DHX9, HNRNPU, IGF2BP1, SYNCRIP and YBX1. Identified in a mRNP complex, at least composed of DHX9, DDX3X, ELAVL1, HNRNPU, IGF2BP1, ILF3, PABPC1, PCBP2, PTBP2, STAU1, STAU2, SYNCRIP and YBX1. Associates with mRNP complex. Interacts with FMR1. Component of a multisubunit autoregulatory RNP complex (ARC), at least composed of IGF2BP1, PABPC1 and CSDE1. Interacts with AGO1 and AGO2. Interacts, through domains KH3 and KH4, with PABPC1 in an RNA-independent manner. Component of a TAU mRNP complex, at least composed of IGF2BP1, ELAVL4 and G3BP. Interacts with ELAVL4 in an RNA-dependent manner. Associates with microtubules and polysomes. Interacts with ELAVL1 and MATR3. Phosphorylated at Ser-181 by mTORC2 cotranslationally, promoting binding to the 3'-UTR of IGF2 mRNA. Expressed in zygotes and blastocysts (at protein level). Expressed in brain, skeletal muscle, trophoblasts of placenta, oocytes and spermatogonia (at protein level). Expressed in testis and ovary. Following colon injury, expressed in the wound bed mesenchyme during the first phase of repair, probably by colonic mesenchymal stem cells (at protein level).

The protein localises to the nucleus. The protein resides in the cytoplasm. Its subcellular location is the perinuclear region. It localises to the P-body. It is found in the stress granule. The protein localises to the cell projection. The protein resides in the lamellipodium. Its subcellular location is the dendrite. It localises to the dendritic spine. It is found in the growth cone. The protein localises to the filopodium. The protein resides in the axon. In terms of biological role, RNA-binding factor that recruits target transcripts to cytoplasmic protein-RNA complexes (mRNPs). This transcript 'caging' into mRNPs allows mRNA transport and transient storage. It also modulates the rate and location at which target transcripts encounter the translational apparatus and shields them from endonuclease attacks or microRNA-mediated degradation. Preferentially binds to N6-methyladenosine (m6A)-containing mRNAs and increases their stability. Regulates localized beta-actin/ACTB mRNA translation, a crucial process for cell polarity, cell migration and neurite outgrowth. Co-transcriptionally associates with the ACTB mRNA in the nucleus. This binding involves a conserved 54-nucleotide element in the ACTB mRNA 3'-UTR, known as the 'zipcode'. The RNP thus formed is exported to the cytoplasm, binds to a motor protein and is transported along the cytoskeleton to the cell periphery. During transport, prevents ACTB mRNA from being translated into protein. When the RNP complex reaches its destination near the plasma membrane, IGF2BP1 is phosphorylated. This releases the mRNA, allowing ribosomal 40S and 60S subunits to assemble and initiate ACTB protein synthesis. Monomeric ACTB then assembles into the subcortical actin cytoskeleton. During neuronal development, key regulator of neurite outgrowth, growth cone guidance and neuronal cell migration, presumably through the spatiotemporal fine tuning of protein synthesis, such as that of ACTB. May regulate mRNA transport to activated synapses. Binds to the 3'-UTR of CD44 mRNA and stabilizes it, hence promotes cell adhesion and invadopodia formation in cancer cells. Binds to the oncofetal H19 transcript and regulates its localization. Binds to and stabilizes BTRC/FBW1A mRNA. Binds to the adenine-rich autoregulatory sequence (ARS) located in PABPC1 mRNA and represses its translation. PABPC1 mRNA-binding is stimulated by PABPC1 protein. Prevents BTRC/FBW1A mRNA degradation by disrupting microRNA-dependent interaction with AGO2. During cellular stress, such as oxidative stress or heat shock, stabilizes target mRNAs that are recruited to stress granules, including CD44, IGF2, MAPK4, MYC, PTEN, RAPGEF2 and RPS6KA5 transcripts. Interacts with GAP43 transcript and transports it to axons. Binds to the 3'-UTR of IGF2 mRNA by a mechanism of cooperative and sequential dimerization and regulates IGF2 mRNA subcellular localization and translation. Binds to MYC mRNA, in the coding region instability determinant (CRD) of the open reading frame (ORF), hence prevents MYC cleavage by endonucleases and possibly microRNA targeting to MYC-CRD. Binding to MYC mRNA is enhanced by m6A-modification of the CRD. Binds to and stabilizes ABCB1/MDR-1 mRNA. Binds to the neuron-specific TAU mRNA and regulates its localization. Plays a direct role in the transport and translation of transcripts required for axonal regeneration in adult sensory neurons. During interstinal wound repair, interacts with and stabilizes PTGS2 transcript. PTGS2 mRNA stabilization may be crucial for colonic mucosal wound healing. The protein is Insulin-like growth factor 2 mRNA-binding protein 1 (Igf2bp1) of Mus musculus (Mouse).